Here is an 892-residue protein sequence, read N- to C-terminus: Putative leucine-rich repeat receptor-like serine/threonine-protein kinase At2g04300 (892 aa).

An N-terminal signal peptide occupies residues 1–26; it reads MKTHPQAILLCVLFFITFGLLHVVEA. The Extracellular portion of the chain corresponds to 27 to 523; that stretch reads GNQEGFISLD…GAKKKNVVVL (497 aa). N-linked (GlcNAc...) asparagine glycosylation is found at Asn-99, Asn-186, Asn-241, Asn-267, and Asn-294. 4 LRR repeats span residues 375–396, 399–422, 423–444, and 447–467; these read IKNI…PCVP, FMWD…FLNL, SSSH…LQNL, and SNNN…SLLV. 5 N-linked (GlcNAc...) asparagine glycosylation sites follow: Asn-407, Asn-421, Asn-437, Asn-450, and Asn-469. The helical transmembrane segment at 524 to 544 threads the bilayer; sequence VVVSIALVVVLGSALALFLVF. Topologically, residues 545 to 892 are cytoplasmic; it reads RKRKTPRNEV…FGTEYTPEAR (348 aa). The residue at position 573 (Thr-573) is a Phosphothreonine. The Protein kinase domain occupies 582–855; the sequence is NNFEKILGKG…QVVIELNECL (274 aa). Residues 588–596 and Lys-610 contribute to the ATP site; that span reads LGKGGFGMV. Tyr-655 bears the Phosphotyrosine mark. Catalysis depends on Asp-707, which acts as the Proton acceptor. Residues Thr-742 and Thr-747 each carry the phosphothreonine modification. Tyr-755 is subject to Phosphotyrosine.

It belongs to the protein kinase superfamily. Ser/Thr protein kinase family.

It localises to the cell membrane. It carries out the reaction L-seryl-[protein] + ATP = O-phospho-L-seryl-[protein] + ADP + H(+). It catalyses the reaction L-threonyl-[protein] + ATP = O-phospho-L-threonyl-[protein] + ADP + H(+). The protein is Putative leucine-rich repeat receptor-like serine/threonine-protein kinase At2g04300 of Arabidopsis thaliana (Mouse-ear cress).